We begin with the raw amino-acid sequence, 37 residues long: Large ribosomal subunit protein bL36 (37 aa).

It belongs to the bacterial ribosomal protein bL36 family.

This Moorella thermoacetica (strain ATCC 39073 / JCM 9320) protein is Large ribosomal subunit protein bL36.